A 178-amino-acid chain; its full sequence is ATP synthase subunit delta (178 aa).

It belongs to the ATPase delta chain family. As to quaternary structure, F-type ATPases have 2 components, F(1) - the catalytic core - and F(0) - the membrane proton channel. F(1) has five subunits: alpha(3), beta(3), gamma(1), delta(1), epsilon(1). F(0) has three main subunits: a(1), b(2) and c(10-14). The alpha and beta chains form an alternating ring which encloses part of the gamma chain. F(1) is attached to F(0) by a central stalk formed by the gamma and epsilon chains, while a peripheral stalk is formed by the delta and b chains.

Its subcellular location is the cell membrane. Functionally, f(1)F(0) ATP synthase produces ATP from ADP in the presence of a proton or sodium gradient. F-type ATPases consist of two structural domains, F(1) containing the extramembraneous catalytic core and F(0) containing the membrane proton channel, linked together by a central stalk and a peripheral stalk. During catalysis, ATP synthesis in the catalytic domain of F(1) is coupled via a rotary mechanism of the central stalk subunits to proton translocation. In terms of biological role, this protein is part of the stalk that links CF(0) to CF(1). It either transmits conformational changes from CF(0) to CF(1) or is implicated in proton conduction. This Moorella thermoacetica (strain ATCC 39073 / JCM 9320) protein is ATP synthase subunit delta.